The chain runs to 122 residues: Large ribosomal subunit protein bL12 (122 aa).

It belongs to the bacterial ribosomal protein bL12 family. As to quaternary structure, homodimer. Part of the ribosomal stalk of the 50S ribosomal subunit. Forms a multimeric L10(L12)X complex, where L10 forms an elongated spine to which 2 to 4 L12 dimers bind in a sequential fashion. Binds GTP-bound translation factors.

Forms part of the ribosomal stalk which helps the ribosome interact with GTP-bound translation factors. Is thus essential for accurate translation. This chain is Large ribosomal subunit protein bL12, found in Histophilus somni (strain 129Pt) (Haemophilus somnus).